We begin with the raw amino-acid sequence, 205 residues long: Holliday junction branch migration complex subunit RuvA (205 aa).

The domain I stretch occupies residues 1–64; that stretch reads MIGKLKGVVD…EDQIRLFGFS (64 aa). A domain II region spans residues 65 to 143; that stretch reads SAAERDWFRL…GFSASEPLAA (79 aa). Positions 144 to 152 are flexible linker; the sequence is QLGGGGVAS. Residues 153–205 are domain III; it reads AQGGAAADAVSALVNLGYGVPQANAAIAAALRGAGEGAKTEVLIRLGLKELAK.

This sequence belongs to the RuvA family. As to quaternary structure, homotetramer. Forms an RuvA(8)-RuvB(12)-Holliday junction (HJ) complex. HJ DNA is sandwiched between 2 RuvA tetramers; dsDNA enters through RuvA and exits via RuvB. An RuvB hexamer assembles on each DNA strand where it exits the tetramer. Each RuvB hexamer is contacted by two RuvA subunits (via domain III) on 2 adjacent RuvB subunits; this complex drives branch migration. In the full resolvosome a probable DNA-RuvA(4)-RuvB(12)-RuvC(2) complex forms which resolves the HJ.

It is found in the cytoplasm. In terms of biological role, the RuvA-RuvB-RuvC complex processes Holliday junction (HJ) DNA during genetic recombination and DNA repair, while the RuvA-RuvB complex plays an important role in the rescue of blocked DNA replication forks via replication fork reversal (RFR). RuvA specifically binds to HJ cruciform DNA, conferring on it an open structure. The RuvB hexamer acts as an ATP-dependent pump, pulling dsDNA into and through the RuvAB complex. HJ branch migration allows RuvC to scan DNA until it finds its consensus sequence, where it cleaves and resolves the cruciform DNA. This Xanthobacter autotrophicus (strain ATCC BAA-1158 / Py2) protein is Holliday junction branch migration complex subunit RuvA.